A 348-amino-acid chain; its full sequence is Papaya proteinase 4 (348 aa).

The signal sequence occupies residues 1-18 (MAIICSFSKLLFVAICLF). The propeptide at 19-132 (GHMSLSYCDF…EEFVNEDIVD (114 aa)) is activation peptide. Cystine bridges form between Cys-154–Cys-195, Cys-188–Cys-227, and Cys-285–Cys-336. Residue Cys-157 is part of the active site. Catalysis depends on residues His-291 and Asn-311.

This sequence belongs to the peptidase C1 family.

The enzyme catalyses Preferential cleavage: Gly-|-Xaa, in proteins and in small molecule substrates.. Its activity is regulated as follows. Not inhibited by cystatin. Functionally, thiol protease with a substrate specificity very different from the other thiol proteases. The polypeptide is Papaya proteinase 4 (Carica papaya (Papaya)).